The sequence spans 467 residues: UDP-N-acetylmuramate--L-alanine ligase (467 aa).

ATP is bound at residue 114 to 120 (GTHGKTT).

Belongs to the MurCDEF family.

The protein resides in the cytoplasm. The catalysed reaction is UDP-N-acetyl-alpha-D-muramate + L-alanine + ATP = UDP-N-acetyl-alpha-D-muramoyl-L-alanine + ADP + phosphate + H(+). It participates in cell wall biogenesis; peptidoglycan biosynthesis. Cell wall formation. The polypeptide is UDP-N-acetylmuramate--L-alanine ligase (Rhodopseudomonas palustris (strain TIE-1)).